The primary structure comprises 155 residues: Endoribonuclease YbeY (155 aa).

3 residues coordinate Zn(2+): His-120, His-124, and His-130.

Belongs to the endoribonuclease YbeY family. Zn(2+) is required as a cofactor.

The protein localises to the cytoplasm. Functionally, single strand-specific metallo-endoribonuclease involved in late-stage 70S ribosome quality control and in maturation of the 3' terminus of the 16S rRNA. The sequence is that of Endoribonuclease YbeY from Staphylococcus epidermidis (strain ATCC 35984 / DSM 28319 / BCRC 17069 / CCUG 31568 / BM 3577 / RP62A).